The sequence spans 122 residues: Large ribosomal subunit protein bL12 (122 aa).

The segment at 96–122 is disordered; it reads APKSLKTGLSKDEANEMKKKLEDAGAT. The segment covering 104–122 has biased composition (basic and acidic residues); the sequence is LSKDEANEMKKKLEDAGAT.

It belongs to the bacterial ribosomal protein bL12 family. Homodimer. Part of the ribosomal stalk of the 50S ribosomal subunit. Forms a multimeric L10(L12)X complex, where L10 forms an elongated spine to which 2 to 4 L12 dimers bind in a sequential fashion. Binds GTP-bound translation factors.

Functionally, forms part of the ribosomal stalk which helps the ribosome interact with GTP-bound translation factors. Is thus essential for accurate translation. The polypeptide is Large ribosomal subunit protein bL12 (Liberibacter asiaticus (Citrus greening disease)).